Consider the following 361-residue polypeptide: C3a anaphylatoxin chemotactic receptor (361 aa).

The Extracellular segment spans residues Met-1–Ser-64. Asn-36 and Asn-50 each carry an N-linked (GlcNAc...) asparagine glycan. The chain crosses the membrane as a helical span at residues Leu-65–Ile-85. At Ala-86–Thr-96 the chain is on the cytoplasmic side. The helical transmembrane segment at Ile-97 to Val-117 threads the bilayer. At Ala-118–Lys-134 the chain is on the extracellular side. Cys-133 and Cys-210 are disulfide-bonded. Residues Ile-135–Ser-155 form a helical membrane-spanning segment. Topologically, residues Leu-156 to Ala-177 are cytoplasmic. A helical membrane pass occupies residues Arg-178–Leu-198. The Extracellular segment spans residues Arg-199 to Ser-224. The chain crosses the membrane as a helical span at residues Ile-225 to Ile-245. The Cytoplasmic segment spans residues Ile-246–Arg-262. A helical membrane pass occupies residues Ile-263–Leu-283. At Ile-284–Pro-301 the chain is on the extracellular side. The helical transmembrane segment at Leu-302–Gly-322 threads the bilayer. The Cytoplasmic portion of the chain corresponds to Gln-323–Leu-361.

Belongs to the G-protein coupled receptor 1 family.

Its subcellular location is the cell membrane. Its function is as follows. Receptor for the chemotactic and inflammatory peptide anaphylatoxin C3a. This receptor stimulates chemotaxis, granule enzyme release and superoxide anion production. The sequence is that of C3a anaphylatoxin chemotactic receptor (c3ar1) from Danio rerio (Zebrafish).